Consider the following 258-residue polypeptide: Isoprenyl transferase 2 (258 aa).

Asp-39 is an active-site residue. Asp-39 provides a ligand contact to Mg(2+). Residues 40 to 43 (GNRR), Trp-44, Arg-52, His-57, and 85 to 87 (SND) each bind substrate. Asn-88 acts as the Proton acceptor in catalysis. Residues Arg-92, Arg-207, and 213-215 (RLS) each bind substrate. Position 226 (Glu-226) interacts with Mg(2+).

Belongs to the UPP synthase family. Homodimer. Mg(2+) serves as cofactor.

In terms of biological role, catalyzes the condensation of isopentenyl diphosphate (IPP) with allylic pyrophosphates generating different type of terpenoids. This is Isoprenyl transferase 2 from Tropheryma whipplei (strain Twist) (Whipple's bacillus).